We begin with the raw amino-acid sequence, 483 residues long: MSVQFSSQTFSSRSAAFPRRGGQGRLSSVSSRAGSVSQMGGFGSSSLYGLGSGRPRVSVGFRSAYGGSSGGGFGARGAGLQEVTINQSLLAPLNLEIDPQIQQVRKEEREQIKTLNNKFASFIDKVRFLEQQNQMLETKWRLLQEQKSSKGSSLPAIFEAHIANLRRQLDGLQGDRGRLEGELKNMQDVVEDFKNKYEGEINKRTAAENEFVVLKKDVDNAYMNKVELEAKVDGLTDEINFLRTLYEMELNELQTQISDTSVVLSMDNSRSLDLDSIISEVKAQYEDIANRSRAEAEYQYQIKFETLQAQAGKHGEDLRSTRNEISEMNRAIQRLQAEIDNVKNQRTKLEASIAEAEERGELALKDARAKQEELEAALQRSKQERARQVREYQDLLNVKLALDIEIATYRKLLEGEESRLSGDGVGAVNISVVNSVGGSLGGGVSLGGTMGGNALGFSSGTGSTIFKTYSTRTTSSSRRSVRN.

Serine 2 carries the N-acetylserine modification. Residues serine 2, serine 6, and serine 7 each carry the phosphoserine modification. Positions 2–107 (SVQFSSQTFS…DPQIQQVRKE (106 aa)) are head. O-linked (GlcNAc) serine glycosylation occurs at serine 12. Positions 14–37 (SAAFPRRGGQGRLSSVSSRAGSVS) are disordered. A Dimethylated arginine; alternate modification is found at arginine 20. Arginine 20 is subject to Omega-N-methylarginine; alternate. Low complexity predominate over residues 25–37 (RLSSVSSRAGSVS). Phosphoserine is present on residues serine 63 and serine 88. A coil 1A region spans residues 107–143 (EEREQIKTLNNKFASFIDKVRFLEQQNQMLETKWRLL). The IF rod domain occupies 108–420 (EREQIKTLNN…KLLEGEESRL (313 aa)). Phosphothreonine is present on threonine 114. The segment at 144–161 (QEQKSSKGSSLPAIFEAH) is linker 1. Lysine 147 participates in a covalent cross-link: Glycyl lysine isopeptide (Lys-Gly) (interchain with G-Cter in SUMO2). Residues 162-253 (IANLRRQLDG…TLYEMELNEL (92 aa)) form a coil 1B region. N6-acetyllysine is present on lysine 196. The segment at 254–277 (QTQISDTSVVLSMDNSRSLDLDSI) is linker 12. Phosphoserine occurs at positions 269 and 271. Residues 278-416 (ISEVKAQYED…ATYRKLLEGE (139 aa)) form a coil 2 region. Glycyl lysine isopeptide (Lys-Gly) (interchain with G-Cter in SUMO2) cross-links involve residues lysine 282 and lysine 303. The residue at position 306 (threonine 306) is a Phosphothreonine. Glycyl lysine isopeptide (Lys-Gly) (interchain with G-Cter in SUMO2) cross-links involve residues lysine 313 and lysine 348. The tract at residues 417 to 483 (ESRLSGDGVG…TSSSRRSVRN (67 aa)) is tail.

The protein belongs to the intermediate filament family. In terms of assembly, heterotetramer of two type I and two type II keratins. Interacts with eukaryotic translation initiator factor 3 (eIF3) subunit EIF3S10. Interacts with GPER1. In terms of processing, arg-20 is dimethylated, probably to asymmetric dimethylarginine.

In terms of biological role, blocks interferon-dependent interphase and stimulates DNA synthesis in cells. The polypeptide is Keratin, type II cytoskeletal 7 (Potorous tridactylus (Potoroo)).